The following is a 425-amino-acid chain: UPF0597 protein VP2173 (425 aa).

This sequence belongs to the UPF0597 family.

The chain is UPF0597 protein VP2173 from Vibrio parahaemolyticus serotype O3:K6 (strain RIMD 2210633).